The primary structure comprises 361 residues: Chorismate synthase (361 aa).

NADP(+) is bound by residues Arg48 and Arg54. FMN contacts are provided by residues 125-127 (RSS), 238-239 (NA), Gly278, 293-297 (KPTSS), and Arg319.

The protein belongs to the chorismate synthase family. As to quaternary structure, homotetramer. It depends on FMNH2 as a cofactor.

It carries out the reaction 5-O-(1-carboxyvinyl)-3-phosphoshikimate = chorismate + phosphate. It participates in metabolic intermediate biosynthesis; chorismate biosynthesis; chorismate from D-erythrose 4-phosphate and phosphoenolpyruvate: step 7/7. Catalyzes the anti-1,4-elimination of the C-3 phosphate and the C-6 proR hydrogen from 5-enolpyruvylshikimate-3-phosphate (EPSP) to yield chorismate, which is the branch point compound that serves as the starting substrate for the three terminal pathways of aromatic amino acid biosynthesis. This reaction introduces a second double bond into the aromatic ring system. The sequence is that of Chorismate synthase from Citrobacter koseri (strain ATCC BAA-895 / CDC 4225-83 / SGSC4696).